The following is a 491-amino-acid chain: Probable CtpA-like serine protease (491 aa).

Positions 1-22 (MNDHQKNHATSQDDNTKSTPSK) are disordered. The segment covering 8 to 22 (HATSQDDNTKSTPSK) has biased composition (polar residues). Residues 31 to 51 (LWHFILVILGIILLTSIITVV) traverse the membrane as a helical segment. In terms of domain architecture, PDZ spans 119-201 (TKQFNEGVSG…TYVTLTIKRG (83 aa)). Active-site charge relay system residues include serine 324, aspartate 335, and lysine 349.

The protein belongs to the peptidase S41A family.

The protein resides in the cell membrane. This Staphylococcus epidermidis (strain ATCC 35984 / DSM 28319 / BCRC 17069 / CCUG 31568 / BM 3577 / RP62A) protein is Probable CtpA-like serine protease.